Reading from the N-terminus, the 213-residue chain is Thiamine-phosphate synthase (213 aa).

4-amino-2-methyl-5-(diphosphooxymethyl)pyrimidine-binding positions include 40-44 (QYRDK) and N72. D73 and D91 together coordinate Mg(2+). Residue T110 participates in 4-amino-2-methyl-5-(diphosphooxymethyl)pyrimidine binding. A 2-[(2R,5Z)-2-carboxy-4-methylthiazol-5(2H)-ylidene]ethyl phosphate-binding site is contributed by 137 to 139 (SHT). K140 contacts 4-amino-2-methyl-5-(diphosphooxymethyl)pyrimidine. A 2-[(2R,5Z)-2-carboxy-4-methylthiazol-5(2H)-ylidene]ethyl phosphate-binding site is contributed by G167.

The protein belongs to the thiamine-phosphate synthase family. The cofactor is Mg(2+).

It carries out the reaction 2-[(2R,5Z)-2-carboxy-4-methylthiazol-5(2H)-ylidene]ethyl phosphate + 4-amino-2-methyl-5-(diphosphooxymethyl)pyrimidine + 2 H(+) = thiamine phosphate + CO2 + diphosphate. It catalyses the reaction 2-(2-carboxy-4-methylthiazol-5-yl)ethyl phosphate + 4-amino-2-methyl-5-(diphosphooxymethyl)pyrimidine + 2 H(+) = thiamine phosphate + CO2 + diphosphate. The enzyme catalyses 4-methyl-5-(2-phosphooxyethyl)-thiazole + 4-amino-2-methyl-5-(diphosphooxymethyl)pyrimidine + H(+) = thiamine phosphate + diphosphate. It participates in cofactor biosynthesis; thiamine diphosphate biosynthesis; thiamine phosphate from 4-amino-2-methyl-5-diphosphomethylpyrimidine and 4-methyl-5-(2-phosphoethyl)-thiazole: step 1/1. Its function is as follows. Condenses 4-methyl-5-(beta-hydroxyethyl)thiazole monophosphate (THZ-P) and 2-methyl-4-amino-5-hydroxymethyl pyrimidine pyrophosphate (HMP-PP) to form thiamine monophosphate (TMP). The chain is Thiamine-phosphate synthase from Stutzerimonas stutzeri (strain A1501) (Pseudomonas stutzeri).